Reading from the N-terminus, the 98-residue chain is Large ribosomal subunit protein uL23 (98 aa).

This sequence belongs to the universal ribosomal protein uL23 family. Part of the 50S ribosomal subunit. Contacts protein L29, and trigger factor when it is bound to the ribosome.

One of the early assembly proteins it binds 23S rRNA. One of the proteins that surrounds the polypeptide exit tunnel on the outside of the ribosome. Forms the main docking site for trigger factor binding to the ribosome. The sequence is that of Large ribosomal subunit protein uL23 from Ruegeria pomeroyi (strain ATCC 700808 / DSM 15171 / DSS-3) (Silicibacter pomeroyi).